The following is a 295-amino-acid chain: Pyridoxal 5'-phosphate synthase subunit PdxS (295 aa).

Aspartate 25 contributes to the D-ribose 5-phosphate binding site. The active-site Schiff-base intermediate with D-ribose 5-phosphate is the lysine 82. Glycine 154 is a binding site for D-ribose 5-phosphate. Residue arginine 166 participates in D-glyceraldehyde 3-phosphate binding. D-ribose 5-phosphate-binding positions include glycine 215 and 236-237 (GS).

It belongs to the PdxS/SNZ family. As to quaternary structure, in the presence of PdxT, forms a dodecamer of heterodimers.

The catalysed reaction is aldehydo-D-ribose 5-phosphate + D-glyceraldehyde 3-phosphate + L-glutamine = pyridoxal 5'-phosphate + L-glutamate + phosphate + 3 H2O + H(+). It functions in the pathway cofactor biosynthesis; pyridoxal 5'-phosphate biosynthesis. Catalyzes the formation of pyridoxal 5'-phosphate from ribose 5-phosphate (RBP), glyceraldehyde 3-phosphate (G3P) and ammonia. The ammonia is provided by the PdxT subunit. Can also use ribulose 5-phosphate and dihydroxyacetone phosphate as substrates, resulting from enzyme-catalyzed isomerization of RBP and G3P, respectively. This chain is Pyridoxal 5'-phosphate synthase subunit PdxS, found in Oceanobacillus iheyensis (strain DSM 14371 / CIP 107618 / JCM 11309 / KCTC 3954 / HTE831).